A 379-amino-acid chain; its full sequence is Quinolinate synthase (379 aa).

The iminosuccinate site is built by H60 and S81. C126 is a [4Fe-4S] cluster binding site. Residues 152–154 and S169 contribute to the iminosuccinate site; that span reads YAN. Residue C213 coordinates [4Fe-4S] cluster. Iminosuccinate contacts are provided by residues 239–241 and T256; that span reads HPE. C310 provides a ligand contact to [4Fe-4S] cluster.

Belongs to the quinolinate synthase family. Type 1 subfamily. [4Fe-4S] cluster is required as a cofactor.

The protein localises to the cytoplasm. It carries out the reaction iminosuccinate + dihydroxyacetone phosphate = quinolinate + phosphate + 2 H2O + H(+). Its pathway is cofactor biosynthesis; NAD(+) biosynthesis; quinolinate from iminoaspartate: step 1/1. Catalyzes the condensation of iminoaspartate with dihydroxyacetone phosphate to form quinolinate. The protein is Quinolinate synthase of Herminiimonas arsenicoxydans.